The primary structure comprises 27 residues: Zinc metalloproteinase multactivase catalytic subunit (27 aa).

The region spanning 12-27 is the Peptidase M12B domain; it reads FIELVIIVDHSXXTYK. A Ca(2+)-binding site is contributed by Glu14.

This sequence belongs to the venom metalloproteinase (M12B) family. P-III subfamily. P-IIId sub-subfamily. As to quaternary structure, heterodimer of a metalloproteinase subunit and a regulatory subunit comprising two homologous disulfide-linked lectins (AC P81798). It depends on Zn(2+) as a cofactor. As to expression, expressed by the venom gland.

The protein localises to the secreted. In terms of biological role, this carinactivase-like calcium-dependent prothrombin (F2) activator activates prothrombin via recognition of the calcium ion bound conformation of its gamma-carboxyglutamic acid (GLA) domain, and the subsequent conversion of prothrombin to active thrombin is catalyzed by the catalytic subunit. The sequence is that of Zinc metalloproteinase multactivase catalytic subunit from Echis multisquamatus (Central Asian sand viper).